A 307-amino-acid chain; its full sequence is MSDYSDLDRQIEQLKRCEIIKENEVKALCAKAREILVEEGNVQRVDSPVTVCGDIHGQFYDLKELFKVGGDVPEKNYLFMGDFVDRGYYSVETFLLLLALKVRYPDRITLIRGNHESRQITQVYGFYDECLRKYGSTAVWRYCTEIFDYLSLSAIIDGKIFCVHGGLSPSIQYLDQIRSIDRKQEVPHDGPMCDLLWSDPEDQTGWGVSPRGAGYLFGSDVVSQFNRTNDIDMICRAHQLVMEGFKWHFNETVLTVWSAPNYCYRCGNVAAILELNEYLHRDFVIFEAAPQESRGIPSKKPQADYFL.

Mn(2+) contacts are provided by Asp54, His56, Asp82, and Asn114. Residue His115 is the Proton donor of the active site. The Mn(2+) site is built by His164 and His238. Leu307 carries the leucine methyl ester modification.

This sequence belongs to the PPP phosphatase family. PP-4 (PP-X) subfamily. In terms of assembly, serine/threonine-protein phosphatase 4 (PP4) occurs in different assemblies of the catalytic and one or more regulatory subunits. Probably part of a PP4 PPP4C-PPP4R2-PPP4R3 complex containing Pp4-19C, PPP4R2r and flfl. Interacts with Ptpa; thereby mediating basal localization of the Miranda (Mira) complex; probably by dephosphorylation of Mira. Mn(2+) is required as a cofactor. Post-translationally, reversibly methyl esterified on Leu-307 by leucine carboxyl methyltransferase 1 (LCMT1) and protein phosphatase methylesterase 1 (PPME1). Carboxyl methylation influences the affinity of the catalytic subunit for the different regulatory subunits, thereby modulating the PP2A holoenzyme's substrate specificity, enzyme activity and cellular localization.

The protein resides in the cytoplasm. It is found in the nucleus. It localises to the cytoskeleton. The protein localises to the microtubule organizing center. Its subcellular location is the centrosome. It catalyses the reaction O-phospho-L-seryl-[protein] + H2O = L-seryl-[protein] + phosphate. The enzyme catalyses O-phospho-L-threonyl-[protein] + H2O = L-threonyl-[protein] + phosphate. Its function is as follows. Protein phosphatase that regulates many processes such as microtubule organization at centrosomes. The probable PP4 complex Pp4-19C-PPP4R2r-flfl (PPP4C-PPP4R2-PPP4R3) is required to prevent caspase-induced cell death (in vitro). The protein is Serine/threonine-protein phosphatase 4 catalytic subunit (Pp4-19C) of Drosophila melanogaster (Fruit fly).